The primary structure comprises 212 residues: Regulatory protein RecX (212 aa).

This sequence belongs to the RecX family.

It localises to the cytoplasm. In terms of biological role, modulates RecA activity. This is Regulatory protein RecX from Clostridioides difficile (strain 630) (Peptoclostridium difficile).